The following is a 449-amino-acid chain: Phosphoglucosamine mutase (449 aa).

Catalysis depends on S100, which acts as the Phosphoserine intermediate. The Mg(2+) site is built by S100, D241, D243, and D245. S100 is modified (phosphoserine).

It belongs to the phosphohexose mutase family. The cofactor is Mg(2+). In terms of processing, activated by phosphorylation.

It carries out the reaction alpha-D-glucosamine 1-phosphate = D-glucosamine 6-phosphate. Functionally, catalyzes the conversion of glucosamine-6-phosphate to glucosamine-1-phosphate. In Caldicellulosiruptor bescii (strain ATCC BAA-1888 / DSM 6725 / KCTC 15123 / Z-1320) (Anaerocellum thermophilum), this protein is Phosphoglucosamine mutase.